Here is a 574-residue protein sequence, read N- to C-terminus: ATP-dependent RNA helicase RhlB (574 aa).

A Q motif motif is present at residues 9–37 (VTFSSFDLHPALVAGLESAGFTRCTPIQA). A Helicase ATP-binding domain is found at 40 to 220 (LPVALPGGDV…YEHMNEPEKL (181 aa)). 53-60 (AQTGTGKT) contacts ATP. The DEAD box signature appears at 166 to 169 (DEAD). Positions 231–393 (RVRQRIYFPS…PVTSELLTPL (163 aa)) constitute a Helicase C-terminal domain. Residues 423 to 432 (EQRAAEEQRR) show a composition bias toward basic and acidic residues. A disordered region spans residues 423-574 (EQRAAEEQRR…RRLRSLVSGN (152 aa)). A compositionally biased stretch (gly residues) spans 435 to 449 (GRSGPGGGSRSGSGG). Over residues 477-495 (AAAAQTEKPVVAAAAAQAP) the composition is skewed to low complexity. Positions 506 to 515 (PRKRRRRRNG) are enriched in basic residues. 2 stretches are compositionally biased toward low complexity: residues 523 to 535 (PAVASTPIAAPAA) and 553 to 562 (SSGSPSLLGR).

Belongs to the DEAD box helicase family. RhlB subfamily. As to quaternary structure, component of the RNA degradosome, which is a multiprotein complex involved in RNA processing and mRNA degradation.

The protein localises to the cytoplasm. It catalyses the reaction ATP + H2O = ADP + phosphate + H(+). DEAD-box RNA helicase involved in RNA degradation. Has RNA-dependent ATPase activity and unwinds double-stranded RNA. The sequence is that of ATP-dependent RNA helicase RhlB from Xanthomonas oryzae pv. oryzae (strain KACC10331 / KXO85).